A 258-amino-acid chain; its full sequence is U6 snRNA phosphodiesterase 1 (258 aa).

Positions 1-20 (MALVDYGGSSSSASEDEDCT) are disordered. The active-site Proton acceptor is the H117. AMP is bound by residues 117–119 (HLS), Y200, and 202–208 (PASFHVS). UMP contacts are provided by residues Y200 and 204–208 (SFHVS). The Proton donor role is filled by H206.

This sequence belongs to the 2H phosphoesterase superfamily. USB1 family.

The protein resides in the nucleus. The enzyme catalyses a 3'-end uridylyl-uridine-RNA = a 3'-end 2',3'-cyclophospho-uridine-RNA + uridine. Its function is as follows. 3'-5' RNA exonuclease that trims the 3' end of oligo(U) tracts of the pre-U6 small nuclear RNA (snRNA) molecule, leading to the formation of a mature U6 snRNA 3' end-terminated with a 2',3'-cyclic phosphate. Participates in the U6 snRNA 3' end processing that prevents U6 snRNA degradation. The chain is U6 snRNA phosphodiesterase 1 from Drosophila melanogaster (Fruit fly).